The following is a 138-amino-acid chain: Large ribosomal subunit protein uL16 (138 aa).

Positions 1-16 (MLIPKRVKFRRQHRPN) are enriched in basic residues. Positions 1 to 25 (MLIPKRVKFRRQHRPNRSGMSKGGN) are disordered.

It belongs to the universal ribosomal protein uL16 family. As to quaternary structure, part of the 50S ribosomal subunit.

Functionally, binds 23S rRNA and is also seen to make contacts with the A and possibly P site tRNAs. This Corynebacterium urealyticum (strain ATCC 43042 / DSM 7109) protein is Large ribosomal subunit protein uL16.